Here is a 148-residue protein sequence, read N- to C-terminus: uncharacterized protein (148 aa).

The next 2 membrane-spanning stretches (helical) occupy residues 16-36 (IVGAVIFSMSIIVILYISIIL) and 41-61 (LSFSIILAVDILIIALFAYIF).

It to M.jannaschii MJ0696.

It localises to the cell membrane. This is an uncharacterized protein from Methanocaldococcus jannaschii (strain ATCC 43067 / DSM 2661 / JAL-1 / JCM 10045 / NBRC 100440) (Methanococcus jannaschii).